The primary structure comprises 277 residues: Small ribosomal subunit protein uS2 (277 aa).

A disordered region spans residues 255–277 (AVATTDEASAPSAAATETTTEEG). Residues 257–277 (ATTDEASAPSAAATETTTEEG) show a composition bias toward low complexity.

Belongs to the universal ribosomal protein uS2 family.

The protein is Small ribosomal subunit protein uS2 of Mycobacteroides abscessus (strain ATCC 19977 / DSM 44196 / CCUG 20993 / CIP 104536 / JCM 13569 / NCTC 13031 / TMC 1543 / L948) (Mycobacterium abscessus).